Reading from the N-terminus, the 73-residue chain is Large ribosomal subunit protein bL31 (73 aa).

The protein belongs to the bacterial ribosomal protein bL31 family. Type A subfamily. As to quaternary structure, part of the 50S ribosomal subunit.

Its function is as follows. Binds the 23S rRNA. This is Large ribosomal subunit protein bL31 from Cereibacter sphaeroides (strain ATCC 17029 / ATH 2.4.9) (Rhodobacter sphaeroides).